A 61-amino-acid polypeptide reads, in one-letter code: Large ribosomal subunit protein bL28 (61 aa).

The protein belongs to the bacterial ribosomal protein bL28 family.

This Nautilia profundicola (strain ATCC BAA-1463 / DSM 18972 / AmH) protein is Large ribosomal subunit protein bL28.